The following is an 846-amino-acid chain: Aminopeptidase N (846 aa).

Substrate is bound by residues glutamate 120 and 252 to 256 (GAMEN). Zn(2+) is bound at residue histidine 288. Catalysis depends on glutamate 289, which acts as the Proton acceptor. Zn(2+)-binding residues include histidine 292 and glutamate 311.

It belongs to the peptidase M1 family. As to quaternary structure, monomer. Zn(2+) serves as cofactor.

The protein resides in the cytoplasm. The enzyme catalyses Release of an N-terminal amino acid, Xaa-|-Yaa- from a peptide, amide or arylamide. Xaa is preferably Ala, but may be most amino acids including Pro (slow action). When a terminal hydrophobic residue is followed by a prolyl residue, the two may be released as an intact Xaa-Pro dipeptide.. Aminopeptidase with broad substrate specificity to several peptides. It has more affinity for oligopeptides than for dipeptides. It plays an essential role in the metabolism, it may be involved in nitrogen supply or protein turnover. This chain is Aminopeptidase N (pepN), found in Lactococcus lactis subsp. lactis (strain IL1403) (Streptococcus lactis).